The chain runs to 275 residues: Dermonecrotic toxin LamSicTox-alphaIV1ii (275 aa).

Histidine 5 is an active-site residue. Residues glutamate 25 and aspartate 27 each contribute to the Mg(2+) site. Residue histidine 41 is the Nucleophile of the active site. 2 disulfide bridges follow: cysteine 45–cysteine 51 and cysteine 47–cysteine 192. Residue aspartate 85 participates in Mg(2+) binding.

It belongs to the arthropod phospholipase D family. Class II subfamily. Requires Mg(2+) as cofactor. As to expression, expressed by the venom gland.

The protein localises to the secreted. It catalyses the reaction an N-(acyl)-sphingosylphosphocholine = an N-(acyl)-sphingosyl-1,3-cyclic phosphate + choline. The catalysed reaction is an N-(acyl)-sphingosylphosphoethanolamine = an N-(acyl)-sphingosyl-1,3-cyclic phosphate + ethanolamine. The enzyme catalyses a 1-acyl-sn-glycero-3-phosphocholine = a 1-acyl-sn-glycero-2,3-cyclic phosphate + choline. It carries out the reaction a 1-acyl-sn-glycero-3-phosphoethanolamine = a 1-acyl-sn-glycero-2,3-cyclic phosphate + ethanolamine. Dermonecrotic toxins cleave the phosphodiester linkage between the phosphate and headgroup of certain phospholipids (sphingolipid and lysolipid substrates), forming an alcohol (often choline) and a cyclic phosphate. This toxin acts on sphingomyelin (SM). It may also act on ceramide phosphoethanolamine (CPE), lysophosphatidylcholine (LPC) and lysophosphatidylethanolamine (LPE), but not on lysophosphatidylserine (LPS), and lysophosphatidylglycerol (LPG). It acts by transphosphatidylation, releasing exclusively cyclic phosphate products as second products. Induces dermonecrosis, hemolysis, increased vascular permeability, edema, inflammatory response, and platelet aggregation. The polypeptide is Dermonecrotic toxin LamSicTox-alphaIV1ii (Loxosceles amazonica (Recluse spider)).